A 1450-amino-acid polypeptide reads, in one-letter code: MESWPGVSLVGLLLLLLLGQGPSQIHGSSGENTSQPQQVFRTLKNFSFPCKPKKLELSVLSKSVHSLRPSDIKLVAAIGNLETPPAPGSGVVNMEKPQSLESELQNVCIGIMTALSDIIRHFNPSVLMPTCSPGKGTAGHTTIAEDLWIQAKELVRHLKDNPELDFEKDWKLITVLFSNTSQCHLCSSDQQKRHLMKHMEMLSGVLDYLHREVPRAFVNLVDLSEVLTMAQQHQETGFSPAPEICKCSEEITKLSKAVMQWSYQEAWEDLLASSKFNKHETFAVVFQSFFSEVELPLERPSPQDSTTLALRIWNSMMEPVGRKDGTLNEAERKTMKCPSQESPYLFTYRNSNYQARQLKPIGKFQMKEGTKFTCPDKDPSDSIPTTVHRLRPADIKVIGAMGDSLTAGNGAGSSPGNVLDVLTQYRGLSWSVGGDETIETVTTLANILREFNPSLKGFSVGTGKENTPRASFNQAVAGAKSDGLAAQAKKLVSLMKDDKTINFQEDWKIITVFIGGNDLCGSCNNLARFSPQTFTDNIKTALDILHAEVPRAFVNMVSVIEITPLRELFNEPKVSCPRMILRSLCPCVLNLGENSAELAQLVERNRQYQEETGKLIESGRYDTRDDFTVVLQPMFENVVMPRTLEGLPDSSFFAPDCFHFNVKTHARSAIALWKNMLEPVGRKTRHQNFEIKVPIMCPNQTSPFLSTTKNSNLGHGTSMSCEEKAPSASPPTSVHTLRPADIQVVAALGDSVTAGNGISSQEGDLADVTTQYRGLSYSAGGDKFLENVTTLPNILREFNGNLTGYSVGTGDVNSASAFLNQAVPGAKAENLASQVQTLIQKMKNDTRVNFHQDWKVITVMIGASDLCDFCKDSNRYSAANFSDHLRNALDILHKEVPRALVNLVDFMNPSIIRQVFLKNPDKCPVNQTSVLCNCVLTPGEDSHELARLEAFTKSYQSSMLQLVESGRYDTREDFSVVLQPFLFNIRLPILENGNPDTSFFAPDCILLSQKFHTQLARALWANMLEPLGKKMDTLDPKELIALACPTKDKPFLRTFRNSNYTYPIKPAIENWGSDFLCTEQSPSSKVPTSVHELRPSDIKVVAAMGDFLTTATGARPSESSSLDTPWRGLSWSIGGDGTLETHTTLPNILKKFNPSILGFSTGTLENTAGLNVAEEGARAQDMPAQAQALVKKMKSTPTINIQEDWKLITLLIGNNDLCLYCEDPENYSTREYVKYIQHALDIFYEELPRVFINVVEVMELSGLLHDQGGKCAMPLAVQKNCSCLKRSQNLMAMQELKKVNGNLQSALSELSYWHRYMQREDFAVTVQPFFRNTFVPLDERGGLDLTFFSEDCFHFSVRGHAEMAIALWNNMLEPVGKKTTSNNFTYNRTKLKCPSPENPFLYTVRNSQILLDKAKENSNTLYWAVPVAAVGGLVVGILGMMLWRTVRLVQ.

The first 27 residues, 1 to 27, serve as a signal peptide directing secretion; that stretch reads MESWPGVSLVGLLLLLLLGQGPSQIHG. Topologically, residues 28–1422 are extracellular; that stretch reads SSGENTSQPQ…KAKENSNTLY (1395 aa). Residues asparagine 32, asparagine 45, and asparagine 179 are each glycosylated (N-linked (GlcNAc...) asparagine). 3 repeat units span residues 41 to 351, 366 to 711, and 712 to 1058. The interval 41-1407 is 4 X 308-326 AA approximate repeats; the sequence is RTLKNFSFPC…NPFLYTVRNS (1367 aa). Residues serine 404, aspartate 518, and histidine 659 contribute to the active site. Asparagine 699 carries an N-linked (GlcNAc...) asparagine glycan. Polar residues predominate over residues 708–720; it reads TKNSNLGHGTSMS. Positions 708-734 are disordered; sequence TKNSNLGHGTSMSCEEKAPSASPPTSV. Asparagine 787, asparagine 801, asparagine 844, asparagine 880, asparagine 926, asparagine 1059, asparagine 1226, asparagine 1280, asparagine 1383, and asparagine 1387 each carry an N-linked (GlcNAc...) asparagine glycan. Residues 1068–1407 form repeat 4; the sequence is IENWGSDFLC…NPFLYTVRNS (340 aa). The segment at 1408–1450 is necessary for membrane localization; sequence QILLDKAKENSNTLYWAVPVAAVGGLVVGILGMMLWRTVRLVQ. Residues 1423–1443 form a helical membrane-spanning segment; it reads WAVPVAAVGGLVVGILGMMLW. Residues 1444-1450 lie on the Cytoplasmic side of the membrane; sequence RTVRLVQ.

It belongs to the 'GDSL' lipolytic enzyme family. Phospholipase B1 subfamily. Undergoes proteolytic cleavage in the ileum. In terms of tissue distribution, expressed in the ileum mucosa, Paneth cells spermatocytes, spermatids and sperm (at protein level). Expressed in the ileum, jejunum, esophagus and testis.

It is found in the apical cell membrane. It catalyses the reaction a 1,2-diacyl-sn-glycero-3-phosphocholine + H2O = a 1-acyl-sn-glycero-3-phosphocholine + a fatty acid + H(+). It carries out the reaction a 1-O-alkyl-2-acyl-sn-glycero-3-phosphocholine + H2O = a 1-O-alkyl-sn-glycero-3-phosphocholine + a fatty acid + H(+). The catalysed reaction is a 1-acyl-sn-glycero-3-phosphocholine + H2O = sn-glycerol 3-phosphocholine + a fatty acid + H(+). The enzyme catalyses a triacylglycerol + H2O = a diacylglycerol + a fatty acid + H(+). It catalyses the reaction 1,2-dihexadecanoyl-sn-glycero-3-phosphocholine + H2O = 1-hexadecanoyl-sn-glycero-3-phosphocholine + hexadecanoate + H(+). It carries out the reaction 1-hexadecanoyl-2-(9Z-octadecenoyl)-sn-glycero-3-phosphocholine + H2O = 1-hexadecanoyl-sn-glycero-3-phosphocholine + (9Z)-octadecenoate + H(+). The catalysed reaction is 1,2-di-(9Z-octadecenoyl)-sn-glycero-3-phosphocholine + H2O = 1-(9Z-octadecenoyl)-sn-glycero-3-phosphocholine + (9Z)-octadecenoate + H(+). The enzyme catalyses 1-hexadecanoyl-2-(9Z,12Z-octadecadienoyl)-sn-glycero-3-phosphocholine + H2O = (9Z,12Z)-octadecadienoate + 1-hexadecanoyl-sn-glycero-3-phosphocholine + H(+). It catalyses the reaction 1-hexadecanoyl-2-(9Z,12Z-octadecadienoyl)-sn-glycero-3-phosphocholine + H2O = 2-(9Z,12Z-octadecadienoyl)-sn-glycero-3-phosphocholine + hexadecanoate + H(+). It carries out the reaction 1-hexadecanoyl-2-(9Z-octadecenoyl)-sn-glycero-3-phosphoethanolamine + H2O = 1-hexadecanoyl-sn-glycero-3-phosphoethanolamine + (9Z)-octadecenoate + H(+). The catalysed reaction is 1-hexadecanoyl-2-(9Z-octadecenoyl)-sn-glycero-3-phospho-(1'-sn-glycerol) + H2O = 1-hexadecanoyl-sn-glycero-3-phospho-(1'-sn-glycerol) + (9Z)-octadecenoate + H(+). The enzyme catalyses 1,2-dihexadecanoyl-sn-glycero-3-phosphocholine + 2 H2O = sn-glycerol 3-phosphocholine + 2 hexadecanoate + 2 H(+). It catalyses the reaction 1-O-hexadecyl-2-(9Z)-octadecenoyl-sn-glycero-3-phosphocholine + H2O = 1-O-hexadecyl-sn-glycero-3-phosphocholine + (9Z)-octadecenoate + H(+). It carries out the reaction 1-hexadecanoyl-sn-glycero-3-phosphocholine + H2O = sn-glycerol 3-phosphocholine + hexadecanoate + H(+). The catalysed reaction is 1,2,3-tri-(9Z-octadecenoyl)-glycerol + H2O = di-(9Z)-octadecenoylglycerol + (9Z)-octadecenoate + H(+). The enzyme catalyses 1-hexadecanoyl-2-(9Z)-octadecenoyl-3-octadecanoyl-sn-glycerol + H2O = 1-hexadecanoyl-2-(9Z-octadecenoyl)-sn-glycerol + octadecanoate + H(+). It catalyses the reaction 1,3-dihexadecanoyl-2-(9Z-octadecenoyl)glycerol + H2O = 1,3-dihexadecanoylglycerol + (9Z)-octadecenoate + H(+). It carries out the reaction 1,3-dihexadecanoyl-2-(9Z-octadecenoyl)glycerol + H2O = 1-hexadecanoyl-2-(9Z-octadecenoyl)-glycerol + hexadecanoate + H(+). The catalysed reaction is 1-hexadecanoyl-2-(9Z)-octadecenoyl-3-octadecanoyl-sn-glycerol + H2O = 1-hexadecanoyl-3-octadecanoyl-sn-glycerol + (9Z)-octadecenoate + H(+). The enzyme catalyses 1-hexadecanoyl-2-(9Z)-octadecenoyl-3-octadecanoyl-sn-glycerol + H2O = 2-(9Z-octadecenoyl)-3-octadecanoyl-sn-glycerol + hexadecanoate + H(+). It catalyses the reaction 1-octadecanoyl-2-(9Z,12Z)-octadecadienoyl-sn-glycerol + H2O = 1-octadecanoyl-sn-glycerol + (9Z,12Z)-octadecadienoate + H(+). It carries out the reaction 1,2-di-(9Z-octadecenoyl)-sn-glycerol + H2O = 1-(9Z-octadecenoyl)-sn-glycerol + (9Z)-octadecenoate + H(+). The catalysed reaction is 2,3-di-(9Z)-octadecenoyl-sn-glycerol + H2O = 3-(9Z-octadecenoyl)-sn-glycerol + (9Z)-octadecenoate + H(+). The enzyme catalyses 1,3-di-(9Z-octadecenoyl)-glycerol + H2O = 1-(9Z-octadecenoyl)-glycerol + (9Z)-octadecenoate + H(+). It catalyses the reaction 1-(9Z-octadecenoyl)-glycerol + H2O = glycerol + (9Z)-octadecenoate + H(+). It carries out the reaction 2-(9Z-octadecenoyl)-glycerol + H2O = glycerol + (9Z)-octadecenoate + H(+). Its activity is regulated as follows. Up-regulated by bile acids such as deoxycholate. Inhibited by diisopropyl fluorophosphate. In terms of biological role, calcium-independent membrane-associated phospholipase that catalyzes complete diacylation of phospholipids by hydrolyzing both sn-1 and sn-2 fatty acyl chains attached to the glycerol backbone (phospholipase B activity). Has dual phospholipase and lysophospholipase activities toward diacylphospholipids. Preferentially cleaves sn-2 ester bonds over sn-1 bonds. Acts as a lipase toward glycerolipid substrates. Hydrolyzes fatty acyl chains of diacylglycerols with preference for the sn-2 position and of triacylglycerols with not positional selectivity. May also hydrolyze long chain retinyl esters such as retinyl palmitate. May contribute to digestion of dietary phospholipids, glycerolipids and retinoids, facilitating lipid absorption at the brush border. This chain is Phospholipase B1, membrane-associated (Plb1), found in Rattus norvegicus (Rat).